The primary structure comprises 73 residues: Protein DSS1 HOMOLOG ON CHROMOSOME V (73 aa).

This sequence belongs to the DSS1/SEM1 family. As to quaternary structure, part of the 26S proteasome. Interacts with BRCA2B. Interacts with EER5. Interacts with UCH1 and UCH2.

Subunit of the 26S proteasome which plays a role in ubiquitin-dependent proteolysis. Also associates with the TREX-2 complex that is required for transcription-coupled mRNA export. The polypeptide is Protein DSS1 HOMOLOG ON CHROMOSOME V (Arabidopsis thaliana (Mouse-ear cress)).